Here is a 491-residue protein sequence, read N- to C-terminus: uncharacterized protein (491 aa).

A substrate-binding site is contributed by W99. N137 contributes to the Ca(2+) binding site. Position 138 (H138) interacts with substrate. Ca(2+) contacts are provided by E177 and D190. Residue R219 participates in substrate binding. D221, H225, and E245 together coordinate Ca(2+). Residue D221 is the Nucleophile of the active site. 224–225 serves as a coordination point for substrate; it reads KH. E245 functions as the Proton donor in the catalytic mechanism. Substrate contacts are provided by G249, H312, and R360.

It belongs to the glycosyl hydrolase 13 family. The cofactor is Ca(2+).

The protein resides in the cytoplasm. It is found in the nucleus. This is an uncharacterized protein from Schizosaccharomyces pombe (strain 972 / ATCC 24843) (Fission yeast).